Consider the following 436-residue polypeptide: Glucose-1-phosphate adenylyltransferase (436 aa).

Alpha-D-glucose 1-phosphate contacts are provided by residues tyrosine 112, glycine 178, 193–194 (EK), and serine 211.

It belongs to the bacterial/plant glucose-1-phosphate adenylyltransferase family. As to quaternary structure, homotetramer.

The enzyme catalyses alpha-D-glucose 1-phosphate + ATP + H(+) = ADP-alpha-D-glucose + diphosphate. Its pathway is glycan biosynthesis; glycogen biosynthesis. Involved in the biosynthesis of ADP-glucose, a building block required for the elongation reactions to produce glycogen. Catalyzes the reaction between ATP and alpha-D-glucose 1-phosphate (G1P) to produce pyrophosphate and ADP-Glc. This chain is Glucose-1-phosphate adenylyltransferase, found in Histophilus somni (strain 129Pt) (Haemophilus somnus).